The chain runs to 474 residues: MSKKLLIKTWGCQMNEYDSSKMADLLNAANGYELTEEPEEADVLLLNTCSIREKAQEKVFHQLGRWKTLKDKKPGVVIGVGGCVATQEGDHIRERAPFVDVIFGPQTLHRLPEMIKQSQSEDAPVMDISFPEIEKFDSLPEPRAEGATAFVSIMEGCSKYCTYCVVPYTRGEEVSRPMDDVLYEIAQLAEQGVREVNLLGQNVNAYRGPTHDGEICSFAELLRLVASIDGIDRIRFTTSHPLEFTDDIIAVYEDTPELVSFLHLPVQSGSDRILTMMKRPHTGIEYKSIIRKLRKARPDIQISSDFIVGFPGESDKDFQDTMKLIKDVDFDMSFSFIFSPRPGTPAADYPCDLSEETKKERLYELQQQINAQAMRYSRLMLGTEQRVLVEGPSKKNLMELRARTENNRVVNFEGSADLIGQFVDVKITDVFANSLRGEIVRTEKDMDLRSVISPTQMMAKTRREDELGVATFTP.

The MTTase N-terminal domain maps to 3 to 120 (KKLLIKTWGC…LPEMIKQSQS (118 aa)). The [4Fe-4S] cluster site is built by cysteine 12, cysteine 49, cysteine 83, cysteine 157, cysteine 161, and cysteine 164. Residues 143-375 (RAEGATAFVS…QQQINAQAMR (233 aa)) enclose the Radical SAM core domain. A TRAM domain is found at 378-441 (RLMLGTEQRV…ANSLRGEIVR (64 aa)).

This sequence belongs to the methylthiotransferase family. MiaB subfamily. In terms of assembly, monomer. [4Fe-4S] cluster serves as cofactor.

It localises to the cytoplasm. The catalysed reaction is N(6)-dimethylallyladenosine(37) in tRNA + (sulfur carrier)-SH + AH2 + 2 S-adenosyl-L-methionine = 2-methylsulfanyl-N(6)-dimethylallyladenosine(37) in tRNA + (sulfur carrier)-H + 5'-deoxyadenosine + L-methionine + A + S-adenosyl-L-homocysteine + 2 H(+). Functionally, catalyzes the methylthiolation of N6-(dimethylallyl)adenosine (i(6)A), leading to the formation of 2-methylthio-N6-(dimethylallyl)adenosine (ms(2)i(6)A) at position 37 in tRNAs that read codons beginning with uridine. The chain is tRNA-2-methylthio-N(6)-dimethylallyladenosine synthase from Vibrio vulnificus (strain CMCP6).